Reading from the N-terminus, the 284-residue chain is Release factor glutamine methyltransferase (284 aa).

S-adenosyl-L-methionine is bound by residues 123–127, D146, W174, and N189; that span reads GTGTG. Substrate is bound at residue 189-192; the sequence is NPPY.

The protein belongs to the protein N5-glutamine methyltransferase family. PrmC subfamily.

The enzyme catalyses L-glutaminyl-[peptide chain release factor] + S-adenosyl-L-methionine = N(5)-methyl-L-glutaminyl-[peptide chain release factor] + S-adenosyl-L-homocysteine + H(+). Methylates the class 1 translation termination release factors RF1/PrfA and RF2/PrfB on the glutamine residue of the universally conserved GGQ motif. This is Release factor glutamine methyltransferase from Francisella tularensis subsp. tularensis (strain SCHU S4 / Schu 4).